The primary structure comprises 425 residues: Dihydroorotase (425 aa).

Zn(2+) is bound by residues histidine 56 and histidine 58. Residues 58-60 (HYR) and asparagine 90 each bind substrate. Zn(2+)-binding residues include aspartate 148, histidine 175, and histidine 228. Asparagine 274 lines the substrate pocket. Aspartate 301 lines the Zn(2+) pocket. Aspartate 301 is a catalytic residue. Substrate is bound by residues histidine 305 and 319–320 (FG).

Belongs to the metallo-dependent hydrolases superfamily. DHOase family. Class I DHOase subfamily. It depends on Zn(2+) as a cofactor.

The enzyme catalyses (S)-dihydroorotate + H2O = N-carbamoyl-L-aspartate + H(+). The protein operates within pyrimidine metabolism; UMP biosynthesis via de novo pathway; (S)-dihydroorotate from bicarbonate: step 3/3. Catalyzes the reversible cyclization of carbamoyl aspartate to dihydroorotate. This chain is Dihydroorotase, found in Lactobacillus delbrueckii subsp. bulgaricus (strain ATCC BAA-365 / Lb-18).